A 463-amino-acid chain; its full sequence is MIEQIGADSKSAENKQERKLYIETYGCQMNVADSEVVASVMQMDGYNLTDNVDEADTILVNTCSVRDNAEQKVLNRLAYYHSLRKKRRASSRLVIGVLGCMAERVKEELIREHHVDVVAGPDSYLDLPNLVGAAEQGEKAINVELSTQETYKDVMPLKMGGVHINGFVSIMRGCNNFCSYCIVPYTRGRERSREIESILNEVRDLKAKNFREVTLLGQNVNSYRYEQNGRIIRFPDLLAAVAEAVPDMRIRFTSPHPKDMDDEAIAVMARYRNICNHIHLPAQSGSDKMLRVMKRGYTRRWYLDRVAAIRRAIPDCAISSDLFCGFHSETEEDFEATLSLMEEVRYDSAFMFKYSERPGTYAARHLADDVPEEVKLSRLDRMIALQNRLSEESNKRDIGKTFEVLIEGFSKRSREQLFGRTQQNKVVIFDKNGHRVGQYIYVRIKDASSATLFGEVVETPTSE.

The 119-residue stretch at 18 to 136 (RKLYIETYGC…LPNLVGAAEQ (119 aa)) folds into the MTTase N-terminal domain. Residues Cys27, Cys63, Cys100, Cys174, Cys178, and Cys181 each coordinate [4Fe-4S] cluster. A Radical SAM core domain is found at 160–392 (GGVHINGFVS…IALQNRLSEE (233 aa)). In terms of domain architecture, TRAM spans 395 to 458 (KRDIGKTFEV…SATLFGEVVE (64 aa)).

It belongs to the methylthiotransferase family. MiaB subfamily. As to quaternary structure, monomer. [4Fe-4S] cluster is required as a cofactor.

The protein resides in the cytoplasm. The catalysed reaction is N(6)-dimethylallyladenosine(37) in tRNA + (sulfur carrier)-SH + AH2 + 2 S-adenosyl-L-methionine = 2-methylsulfanyl-N(6)-dimethylallyladenosine(37) in tRNA + (sulfur carrier)-H + 5'-deoxyadenosine + L-methionine + A + S-adenosyl-L-homocysteine + 2 H(+). Catalyzes the methylthiolation of N6-(dimethylallyl)adenosine (i(6)A), leading to the formation of 2-methylthio-N6-(dimethylallyl)adenosine (ms(2)i(6)A) at position 37 in tRNAs that read codons beginning with uridine. This chain is tRNA-2-methylthio-N(6)-dimethylallyladenosine synthase, found in Porphyromonas gingivalis (strain ATCC BAA-308 / W83).